A 316-amino-acid chain; its full sequence is tRNA-cytidine(32) 2-sulfurtransferase (316 aa).

The tract at residues 1–31 (MGAVIDDSMPGPGADATGTGPSDARTERETR) is disordered. Residues 10 to 21 (PGPGADATGTGP) are compositionally biased toward low complexity. The PP-loop motif signature appears at 62-67 (SGGKDS). The [4Fe-4S] cluster site is built by cysteine 137, cysteine 140, and cysteine 228.

It belongs to the TtcA family. As to quaternary structure, homodimer. It depends on Mg(2+) as a cofactor. Requires [4Fe-4S] cluster as cofactor.

Its subcellular location is the cytoplasm. It catalyses the reaction cytidine(32) in tRNA + S-sulfanyl-L-cysteinyl-[cysteine desulfurase] + AH2 + ATP = 2-thiocytidine(32) in tRNA + L-cysteinyl-[cysteine desulfurase] + A + AMP + diphosphate + H(+). It functions in the pathway tRNA modification. In terms of biological role, catalyzes the ATP-dependent 2-thiolation of cytidine in position 32 of tRNA, to form 2-thiocytidine (s(2)C32). The sulfur atoms are provided by the cysteine/cysteine desulfurase (IscS) system. The protein is tRNA-cytidine(32) 2-sulfurtransferase of Verminephrobacter eiseniae (strain EF01-2).